An 854-amino-acid polypeptide reads, in one-letter code: MAKIKKKEAKAKPLTRKEQRKQKSEFKKQNKRLYFAGKTNGTQRVAAAAEALAAQSQLGKNKKKKRSKKPKIINPDEIPKEQLLSGEIDSDDDESIDSDFSDAEVDALLPAREKMEVYEPLGKKVKKTTGGAIQRQDEEAVRRKELRQQKELESKSKKQRIKQLRIENEEDDREINKLEKKLKLNKSKDKNRLVRKMFNDGLDYLLDFVLDDEEEKRKWEEKQERKKKLKEQQEKEEAGMWSDEEEDKEDRDEPMDNFSEDDSGSEGEDDDEDLTGEEEQSEEDSEQEENAPKIKEDIYGRKRDAEGNILPDPVELEASAAGQKYIPPHQRALMAASAGSSEKQAEILARLLKQCKGLLNRLSEANLHKIAAGIEELYMKNSRYNMNETLTKLIQEALLGYTRTNERMVQEHMVLLAYLHAQVGSEIGAHFLQTFVELFDGYVKNIATLEVEDKQLNNLVLVLCYMYLFKIYELNLLMELIGKLSDQLCEKSVECLLLIFQSIGFRLRKDDPLAFKTMMQKVQSQIASAPLELKENPRLRFMVDILNAVKNNNMQKLPQYDPELAENLRKRLKAMLKNDRYVVTLNITLEDLLRADKVGKWWIVGSAWTGNLDEMGSAKQKQDKNSSKSANGGFADQLLELARKQQMNTAERRNIFCIIMSAADYVDAFEKILHLSLKDQRAVAYVIIHCALNEKRANPYYAHLALKFCQFNRKYQLAFQFASWDRINDIEKLSKPQIRNLASFLQQVILAAGLQLSVLKVVDFMQLDKLSFYFMKEVMVRLLLANDEREIYQTFERVAKNTKLQQFKQSVRLFLQHFLLQEEQLDKLKLKDEDRQLLQQRVDHIDKLLAYVDL.

4 disordered regions span residues 1-38 (MAKI…FAGK), 55-105 (QSQL…DAEV), 120-161 (PLGK…KQRI), and 217-306 (RKWE…RDAE). Residues 15 to 28 (TRKEQRKQKSEFKK) show a composition bias toward basic and acidic residues. Residues 60 to 71 (KNKKKKRSKKPK) show a composition bias toward basic residues. A compositionally biased stretch (acidic residues) spans 88 to 105 (IDSDDDESIDSDFSDAEV). 2 stretches are compositionally biased toward basic and acidic residues: residues 135 to 156 (RQDE…ESKS) and 217 to 238 (RKWE…KEEA). Acidic residues predominate over residues 242 to 289 (SDEEEDKEDRDEPMDNFSEDDSGSEGEDDDEDLTGEEEQSEEDSEQEE). Residues 290–306 (NAPKIKEDIYGRKRDAE) are compositionally biased toward basic and acidic residues. Positions 352-553 (LKQCKGLLNR…DILNAVKNNN (202 aa)) constitute an MIF4G domain. One can recognise an MI domain in the interval 650-764 (AERRNIFCII…QLSVLKVVDF (115 aa)).

The protein belongs to the CWC22 family.

It localises to the nucleus. The protein localises to the nucleolus. The protein is Nucleolar MIF4G domain-containing protein 1 homolog of Drosophila melanogaster (Fruit fly).